We begin with the raw amino-acid sequence, 493 residues long: Probable polyol transporter 6 (493 aa).

Transmembrane regions (helical) follow at residues 25–45, 54–74, 85–105, 116–136, 142–162, 177–197, 275–295, 313–333, 343–363, 372–392, 414–434, and 444–464; these read SIVSIIFGYDTGVMSGAMVFI, VQIEVLTGILNLCALVGSLLA, YTIVLASILFMLGSILMGWGP, TAGLGVGFALMVAPVYSAEIA, GLLASLPHLCISIGILLGYIV, LMLGIAAVPSLVLAFGILKMP, VLLTALGIHFFQHASGIEAVL, LFLVTIGVGIMKTTFIFTATL, LLLTSVGGMVIALTMLGFGLT, LAWALVLSIVAAYSFVAFFSI, GASLGVAVNRVMNATVSMSFL, and GAFFMFAGVAAVAWNFFFFLL.

The protein belongs to the major facilitator superfamily. Sugar transporter (TC 2.A.1.1) family.

The protein localises to the membrane. Its function is as follows. Plasma membrane sugar-proton symporter. The chain is Probable polyol transporter 6 (PLT6) from Arabidopsis thaliana (Mouse-ear cress).